A 206-amino-acid chain; its full sequence is Urease accessory protein UreG (206 aa).

13–20 (GPVGSGKT) is a GTP binding site.

The protein belongs to the SIMIBI class G3E GTPase family. UreG subfamily. In terms of assembly, homodimer. UreD, UreF and UreG form a complex that acts as a GTP-hydrolysis-dependent molecular chaperone, activating the urease apoprotein by helping to assemble the nickel containing metallocenter of UreC. The UreE protein probably delivers the nickel.

It localises to the cytoplasm. Functionally, facilitates the functional incorporation of the urease nickel metallocenter. This process requires GTP hydrolysis, probably effectuated by UreG. This Haloquadratum walsbyi (strain DSM 16790 / HBSQ001) protein is Urease accessory protein UreG.